Reading from the N-terminus, the 348-residue chain is Delta(6)-protoilludene synthase 18 (348 aa).

Residues aspartate 87, asparagine 223, serine 227, and glutamate 231 each contribute to the Mg(2+) site. The DDXXD motif signature appears at 87-91 (DEYTD). Residues 223–231 (NDLVSYNRE) carry the NSE/DTE motif motif. 2 residues coordinate (2E,6E)-farnesyl diphosphate: arginine 311 and tyrosine 312.

It belongs to the terpene synthase family. It depends on Mg(2+) as a cofactor.

The catalysed reaction is (2E,6E)-farnesyl diphosphate = Delta(6)-protoilludene + diphosphate. Functionally, terpene cyclase that catalyzes the cyclization of farnesyl diphosphate (FPP) to delta(6)-protoilludene. The sequence is that of Delta(6)-protoilludene synthase 18 from Postia placenta (strain ATCC 44394 / Madison 698-R) (Brown rot fungus).